Reading from the N-terminus, the 313-residue chain is MSQDFAHLSVLLAETVDGLNIRADGIYIDGTFGRGGHSREVLSRLGVDGRLIAIDRDPQAIKAAEQFANDSRFQIVHGGFGQLANYVEELGLVGKIDGVLLDLGVSSPQLDDAERGFSFLRDGPLDMRMDNSQGETAAQWLARAEIEDMAWVFKTYGEERNARHIARCIAADREKTPFTRTKQLADLIARVAKSKERNKHPATRVFQAIRIYINSELEQIDQALEGALKVLAPHGRLSIISFHSLEDRIVKRFIRRHSQGEELPHGLPVTEAQLNKSRTLMPVGKAMKPSDVEIEQNARARSSVLRVAERLPF.

S-adenosyl-L-methionine contacts are provided by residues 35–37, Asp55, Phe80, Asp102, and Gln109; that span reads GGH.

This sequence belongs to the methyltransferase superfamily. RsmH family.

It localises to the cytoplasm. It carries out the reaction cytidine(1402) in 16S rRNA + S-adenosyl-L-methionine = N(4)-methylcytidine(1402) in 16S rRNA + S-adenosyl-L-homocysteine + H(+). Functionally, specifically methylates the N4 position of cytidine in position 1402 (C1402) of 16S rRNA. In Shewanella amazonensis (strain ATCC BAA-1098 / SB2B), this protein is Ribosomal RNA small subunit methyltransferase H.